Here is a 119-residue protein sequence, read N- to C-terminus: Ribosome-binding factor A (119 aa).

Belongs to the RbfA family. Monomer. Binds 30S ribosomal subunits, but not 50S ribosomal subunits or 70S ribosomes.

Its subcellular location is the cytoplasm. One of several proteins that assist in the late maturation steps of the functional core of the 30S ribosomal subunit. Associates with free 30S ribosomal subunits (but not with 30S subunits that are part of 70S ribosomes or polysomes). Required for efficient processing of 16S rRNA. May interact with the 5'-terminal helix region of 16S rRNA. The polypeptide is Ribosome-binding factor A (Chlorobium limicola (strain DSM 245 / NBRC 103803 / 6330)).